The primary structure comprises 571 residues: Protein EARLY STARVATION 1, chloroplastic (571 aa).

Disordered regions lie at residues 142–162 and 215–254; these read RHSS…KDAG and GSYR…TEHD. Over residues 145–155 the composition is skewed to low complexity; the sequence is SCSSQSLPQQQ.

Belongs to the ESV1 family.

The protein resides in the plastid. The protein localises to the chloroplast stroma. Functionally, binds preferentially to highly ordered alpha-glucans, such as starch and crystalline maltodextrins. Involved in the organization of the starch granule matrix, thus influencing starch turnover by modulating the accessibility of starch polymers to modifying and degrading enzymes. Required for the control of starch degradation in leaves and starch distribution in nonphotosynthetic parts. Promotes gravitropic responses, negative in shoots but positive in roots, by facilitating starch granules (statoliths) formation in hypocotyls and roots columella. The protein is Protein EARLY STARVATION 1, chloroplastic of Marchantia polymorpha (Common liverwort).